Reading from the N-terminus, the 592-residue chain is ATP-dependent RNA helicase DBP3 (592 aa).

Residues 1-146 (MGKRPIEDDA…AGSYTEHTEL (146 aa)) are disordered. Residues 19-31 (KKSKKEKSGKSKK) show a composition bias toward basic residues. A compositionally biased stretch (basic and acidic residues) spans 73 to 82 (EAKEASKAGK). A compositionally biased stretch (basic residues) spans 97–108 (AARKAARKAEKK). Positions 116-141 (TASSAPTEASSVPAQTLSSSNAGSYT) are enriched in polar residues. The Q motif signature appears at 179-206 (VNFKYLPVTDESQRAPFAGFTAPTPIQA). The Helicase ATP-binding domain maps to 209 to 382 (WPFLLSGRDM…STFMVSPVRI (174 aa)). Position 222-229 (222-229 (AETGSGKT)) interacts with ATP. The DEAD box signature appears at 330–333 (DEAD). The Helicase C-terminal domain occupies 413-562 (RLLQLLKQYQ…EVPEELLKFG (150 aa)).

Belongs to the DEAD box helicase family. DDX5/DBP2 subfamily.

It is found in the nucleus. Its subcellular location is the nucleolus. It catalyses the reaction ATP + H2O = ADP + phosphate + H(+). ATP-dependent RNA helicase required for 60S ribosomal subunit synthesis. Involved in efficient pre-rRNA processing, predominantly at site A3, which is necessary for the normal formation of 25S and 5.8S rRNAs. The chain is ATP-dependent RNA helicase DBP3 (DBP3) from Phaeosphaeria nodorum (strain SN15 / ATCC MYA-4574 / FGSC 10173) (Glume blotch fungus).